The sequence spans 145 residues: MRHRVSGRKLNRTTSHLLAMLANMSVSLIQHEQINTTLPKAKELRPFVEKLITVAKKGNLNARRYLISKIKNELAVEKLMTTLAPRYAERHGGYIRILKAGFRYGDMAPMAYIEFVDRNIESKGKEFKALKNDSRNAKLIAEQSN.

Belongs to the bacterial ribosomal protein bL17 family. In terms of assembly, part of the 50S ribosomal subunit. Contacts protein L32.

This is Large ribosomal subunit protein bL17 from Orientia tsutsugamushi (strain Ikeda) (Rickettsia tsutsugamushi).